Consider the following 381-residue polypeptide: Cytochrome b (381 aa).

4 helical membrane passes run phenylalanine 34–methionine 54, tryptophan 78–isoleucine 99, tryptophan 114–leucine 134, and phenylalanine 179–threonine 199. Residues histidine 84 and histidine 98 each coordinate heme b. Histidine 183 and histidine 197 together coordinate heme b. An a ubiquinone-binding site is contributed by histidine 202. The next 4 membrane-spanning stretches (helical) occupy residues methionine 227–threonine 247, leucine 289–histidine 309, methionine 321–serine 341, and phenylalanine 348–proline 368.

The protein belongs to the cytochrome b family. The cytochrome bc1 complex contains 11 subunits: 3 respiratory subunits (MT-CYB, CYC1 and UQCRFS1), 2 core proteins (UQCRC1 and UQCRC2) and 6 low-molecular weight proteins (UQCRH/QCR6, UQCRB/QCR7, UQCRQ/QCR8, UQCR10/QCR9, UQCR11/QCR10 and a cleavage product of UQCRFS1). This cytochrome bc1 complex then forms a dimer. Heme b is required as a cofactor.

The protein resides in the mitochondrion inner membrane. Functionally, component of the ubiquinol-cytochrome c reductase complex (complex III or cytochrome b-c1 complex) that is part of the mitochondrial respiratory chain. The b-c1 complex mediates electron transfer from ubiquinol to cytochrome c. Contributes to the generation of a proton gradient across the mitochondrial membrane that is then used for ATP synthesis. In Nothoprocta perdicaria (Chilean tinamou), this protein is Cytochrome b (MT-CYB).